Reading from the N-terminus, the 322-residue chain is Malate dehydrogenase (322 aa).

Residues 10–15 (GSGQIG) and aspartate 34 each bind NAD(+). Residues arginine 83 and arginine 89 each coordinate substrate. NAD(+)-binding positions include asparagine 96 and 119-121 (ITN). Asparagine 121 and arginine 152 together coordinate substrate. The Proton acceptor role is filled by histidine 176.

The protein belongs to the LDH/MDH superfamily. MDH type 3 family.

It catalyses the reaction (S)-malate + NAD(+) = oxaloacetate + NADH + H(+). Its function is as follows. Catalyzes the reversible oxidation of malate to oxaloacetate. The chain is Malate dehydrogenase from Bradyrhizobium sp. (strain ORS 278).